The following is a 149-amino-acid chain: Calmodulin (149 aa).

Ala-2 bears the N-acetylalanine mark. EF-hand domains lie at 8–43 (EQIA…LGQN), 44–79 (PTEA…KMKD), 81–116 (DSEE…LGEK), and 117–149 (LTDE…MMAK). The Ca(2+) site is built by Asp-21, Asp-23, Asp-25, Ser-27, Glu-32, Asp-57, Asp-59, Asn-61, Thr-63, Glu-68, Asp-94, Asp-96, Asn-98, Tyr-100, and Asp-105. N6,N6,N6-trimethyllysine is present on Lys-116. The Ca(2+) site is built by Asp-130, Asp-132, Asp-134, Gln-136, and Glu-141.

This sequence belongs to the calmodulin family.

In terms of biological role, calmodulin mediates the control of a large number of enzymes, ion channels and other proteins by Ca(2+). Among the enzymes to be stimulated by the calmodulin-Ca(2+) complex are a number of protein kinases and phosphatases. This is Calmodulin from Mougeotia scalaris (Green alga).